Here is a 296-residue protein sequence, read N- to C-terminus: Ethanolamine ammonia-lyase small subunit (296 aa).

Positions 209 and 230 each coordinate adenosylcob(III)alamin.

The protein belongs to the EutC family. As to quaternary structure, the basic unit is a heterodimer which dimerizes to form tetramers. The heterotetramers trimerize; 6 large subunits form a core ring with 6 small subunits projecting outwards. Requires adenosylcob(III)alamin as cofactor.

It is found in the bacterial microcompartment. It carries out the reaction ethanolamine = acetaldehyde + NH4(+). Its pathway is amine and polyamine degradation; ethanolamine degradation. In terms of biological role, catalyzes the deamination of various vicinal amino-alcohols to oxo compounds. Allows this organism to utilize ethanolamine as the sole source of nitrogen and carbon in the presence of external vitamin B12. The sequence is that of Ethanolamine ammonia-lyase small subunit from Lachnoclostridium phytofermentans (strain ATCC 700394 / DSM 18823 / ISDg) (Clostridium phytofermentans).